Reading from the N-terminus, the 92-residue chain is Phospholemman (92 aa).

The signal sequence occupies residues 1–20 (MAYLHHTLLVCMGLLAMANA). At 22-35 (APQEQDPFTYDYQS) the chain is on the extracellular side. A helical membrane pass occupies residues 36 to 56 (LRIGGLIIAGILFILGILIIL). Topologically, residues 57–92 (KRGAWERFDTARRTGEPDEEEGTFRSSIRRLSTRRR) are cytoplasmic. Residues 67-92 (ARRTGEPDEEEGTFRSSIRRLSTRRR) form a disordered region. Residue Thr-79 is modified to Phosphothreonine. Ser-82 bears the Phosphoserine mark. Ser-83 carries the post-translational modification Phosphoserine; by PKA and PKC. Over residues 83-92 (SIRRLSTRRR) the composition is skewed to basic residues. Residue Ser-88 is modified to Phosphoserine; by PKA. The residue at position 89 (Thr-89) is a Phosphothreonine; by PKC.

It belongs to the FXYD family. Homotetramer. Monomer. Regulatory subunit of the sodium/potassium-transporting ATPase (NKA) which is composed of a catalytic alpha subunit, a non-catalytic beta subunit and an additional regulatory subunit. The monomeric form associates with NKA while the oligomeric form does not. Interacts with the catalytic alpha-1 subunit ATP1A1. Also interacts with the catalytic alpha-2 and alpha-3 subunits ATP1A2 and ATP1A3. Very little interaction with ATP1A1, ATP1A2 or ATP1A3 when phosphorylated at Ser-83. Interacts with the non-catalytic beta-1 subunit ATP1B1. Oxidative stress decreases interaction with ATP1A1 but increases interaction with ATP1B1. Major plasma membrane substrate for cAMP-dependent protein kinase (PKA) and protein kinase C (PKC) in several different tissues. Phosphorylated in response to insulin and adrenergic stimulation. Phosphorylation at Ser-88 stimulates sodium/potassium-transporting ATPase activity while the unphosphorylated form inhibits sodium/potassium-transporting ATPase activity. Phosphorylation increases tetramerization, decreases binding to ATP1A1 and reduces inhibition of ATP1A1 activity. Phosphorylation at Ser-83 leads to greatly reduced interaction with ATP1A1, ATP1A2 and ATP1A3. May be phosphorylated by DMPK. Post-translationally, palmitoylation increases half-life and stability and is enhanced upon phosphorylation at Ser-88 by PKA. In terms of processing, glutathionylated. In terms of tissue distribution, expressed in ventricular myocytes (at protein level).

It localises to the cell membrane. Its subcellular location is the sarcolemma. The protein resides in the apical cell membrane. The protein localises to the membrane. It is found in the caveola. It localises to the T-tubule. Associates with and regulates the activity of the sodium/potassium-transporting ATPase (NKA) which transports Na(+) out of the cell and K(+) into the cell. Inhibits NKA activity in its unphosphorylated state and stimulates activity when phosphorylated. Reduces glutathionylation of the NKA beta-1 subunit ATP1B1, thus reversing glutathionylation-mediated inhibition of ATP1B1. Contributes to female sexual development by maintaining the excitability of neurons which secrete gonadotropin-releasing hormone. In Oryctolagus cuniculus (Rabbit), this protein is Phospholemman.